The primary structure comprises 137 residues: Probable calcium-binding protein CML33 (137 aa).

EF-hand domains lie at 1-36, 37-72, 76-111, and 112-137; these read MNNM…LSPS, IPSE…TAQS, DVEK…LGEK, and CTVE…FVGV. D14, S16, D18, K20, and E25 together coordinate Ca(2+). D89, N91, D93, K95, and E100 together coordinate Ca(2+).

Its function is as follows. Potential calcium sensor. This Arabidopsis thaliana (Mouse-ear cress) protein is Probable calcium-binding protein CML33 (CML33).